The primary structure comprises 613 residues: DNA mismatch repair protein MutL (613 aa).

The interval 364 to 393 is disordered; the sequence is EPAVARQPEAPRYSSGASAPRPTGANYPHA.

The protein belongs to the DNA mismatch repair MutL/HexB family.

This protein is involved in the repair of mismatches in DNA. It is required for dam-dependent methyl-directed DNA mismatch repair. May act as a 'molecular matchmaker', a protein that promotes the formation of a stable complex between two or more DNA-binding proteins in an ATP-dependent manner without itself being part of a final effector complex. The protein is DNA mismatch repair protein MutL of Enterobacter sp. (strain 638).